The primary structure comprises 359 residues: Palmitoyltransferase ERF2 (359 aa).

Residues 1–21 (MALVSRRSTRSESTSITKEEH) are disordered. At 1–75 (MALVSRRSTR…RFRTVKGAKP (75 aa)) the chain is on the cytoplasmic side. The chain crosses the membrane as a helical span at residues 76 to 96 (LWLGVLLAIVCPMVLFSIFEA). At 97-104 (HKLWHTQN) the chain is on the lumenal side. Residues 105-125 (GYKVLVIFFYYFWVITLASFI) traverse the membrane as a helical segment. Residues 126-217 (RTATSDPGVL…NCIGKRNYRF (92 aa)) are Cytoplasmic-facing. Residues 173-223 (KYCPSCRIWRPPRSSHCSTCNVCVMVHDHHCIWVNNCIGKRNYRFFLIFLL) form the DHHC domain. Catalysis depends on C203, which acts as the S-palmitoyl cysteine intermediate. The helical transmembrane segment at 218 to 238 (FLIFLLGAILSSVILLTNCAI) threads the bilayer. Residues 239 to 250 (HIARESGGPRDC) lie on the Lumenal side of the membrane. The chain crosses the membrane as a helical span at residues 251-271 (PVAILLLCYAGLTLWYPAILF). At 272 to 359 (TYHIFMAGNQ…AHSFEKIQKI (88 aa)) the chain is on the cytoplasmic side.

It belongs to the DHHC palmitoyltransferase family. ERF2/ZDHHC9 subfamily. As to quaternary structure, interacts with SHR5. Autopalmitoylated.

The protein resides in the endoplasmic reticulum membrane. It carries out the reaction L-cysteinyl-[protein] + hexadecanoyl-CoA = S-hexadecanoyl-L-cysteinyl-[protein] + CoA. In terms of biological role, the ERF2-SHR5 complex is a palmitoyltransferase specific for Ras proteins. Palmitoylates RAS2, which is required for its proper plasma membrane localization. In Saccharomyces cerevisiae (strain ATCC 204508 / S288c) (Baker's yeast), this protein is Palmitoyltransferase ERF2 (ERF2).